The chain runs to 375 residues: Chaperone protein DnaJ (375 aa).

A J domain is found at 4 to 68 (DYYEILGVSR…ETRARYDRFG (65 aa)). The CR-type zinc finger occupies 134 to 216 (GGEKEIRIRH…CGGSGRKQET (83 aa)). Positions 147, 150, 164, 167, 190, 193, 204, and 207 each coordinate Zn(2+). CXXCXGXG motif repeat units follow at residues 147 to 154 (CQVCEGSG), 164 to 171 (CSTCSGSG), 190 to 197 (CPTCNGSG), and 204 to 211 (CEACGGSG).

This sequence belongs to the DnaJ family. Homodimer. It depends on Zn(2+) as a cofactor.

The protein resides in the cytoplasm. Participates actively in the response to hyperosmotic and heat shock by preventing the aggregation of stress-denatured proteins and by disaggregating proteins, also in an autonomous, DnaK-independent fashion. Unfolded proteins bind initially to DnaJ; upon interaction with the DnaJ-bound protein, DnaK hydrolyzes its bound ATP, resulting in the formation of a stable complex. GrpE releases ADP from DnaK; ATP binding to DnaK triggers the release of the substrate protein, thus completing the reaction cycle. Several rounds of ATP-dependent interactions between DnaJ, DnaK and GrpE are required for fully efficient folding. Also involved, together with DnaK and GrpE, in the DNA replication of plasmids through activation of initiation proteins. The chain is Chaperone protein DnaJ from Gloeothece citriformis (strain PCC 7424) (Cyanothece sp. (strain PCC 7424)).